Reading from the N-terminus, the 73-residue chain is MLVMGRKKGESILIGDDIEITIVSLDENSVKIAINAPREVTILRKELYNKIKEENKEAVIKSSEVLKELTLKK.

Belongs to the CsrA/RsmA family. As to quaternary structure, homodimer; the beta-strands of each monomer intercalate to form a hydrophobic core, while the alpha-helices form wings that extend away from the core.

The protein localises to the cytoplasm. Functionally, a translational regulator that binds mRNA to regulate translation initiation and/or mRNA stability. Usually binds in the 5'-UTR at or near the Shine-Dalgarno sequence preventing ribosome-binding, thus repressing translation. Its main target seems to be the major flagellin gene, while its function is anatagonized by FliW. The chain is Translational regulator CsrA from Clostridium acetobutylicum (strain ATCC 824 / DSM 792 / JCM 1419 / IAM 19013 / LMG 5710 / NBRC 13948 / NRRL B-527 / VKM B-1787 / 2291 / W).